A 105-amino-acid polypeptide reads, in one-letter code: Large ribosomal subunit protein uL23 (105 aa).

Belongs to the universal ribosomal protein uL23 family. In terms of assembly, part of the 50S ribosomal subunit. Contacts protein L29, and trigger factor when it is bound to the ribosome.

One of the early assembly proteins it binds 23S rRNA. One of the proteins that surrounds the polypeptide exit tunnel on the outside of the ribosome. Forms the main docking site for trigger factor binding to the ribosome. In Chloroherpeton thalassium (strain ATCC 35110 / GB-78), this protein is Large ribosomal subunit protein uL23.